Here is a 460-residue protein sequence, read N- to C-terminus: Cysteine--tRNA ligase (460 aa).

Zn(2+) is bound at residue Cys-28. Positions 30–40 match the 'HIGH' region motif; the sequence is VTIYDLCHIGH. Residues Cys-209, His-234, and Glu-238 each contribute to the Zn(2+) site. Residues 266 to 270 carry the 'KMSKS' region motif; sequence KMSKS. Lys-269 contributes to the ATP binding site.

The protein belongs to the class-I aminoacyl-tRNA synthetase family. Monomer. The cofactor is Zn(2+).

The protein localises to the cytoplasm. It catalyses the reaction tRNA(Cys) + L-cysteine + ATP = L-cysteinyl-tRNA(Cys) + AMP + diphosphate. The protein is Cysteine--tRNA ligase of Vibrio vulnificus (strain YJ016).